A 629-amino-acid chain; its full sequence is Ribosomal protein S6 kinase 2 beta (629 aa).

The 260-residue stretch at Phe62–Phe321 folds into the Protein kinase 1 domain. Residues Leu68–Val76 and Lys94 each bind ATP. Asp187 (proton acceptor) is an active-site residue. The residue at position 221 (Ser221) is a Phosphoserine. In terms of domain architecture, AGC-kinase C-terminal spans Ser322–Ala391. Thr359 carries the phosphothreonine modification. Residue Ser363 is modified to Phosphoserine. Ser380 carries the post-translational modification Phosphoserine; by autocatalysis. The Protein kinase 2 domain maps to Tyr416–Ser629. ATP is bound by residues Ile422–Cys430 and Lys445. Asp533 (proton acceptor) is an active-site residue. Thr571 is subject to Phosphothreonine.

It belongs to the protein kinase superfamily. AGC Ser/Thr protein kinase family. S6 kinase subfamily. It depends on Mg(2+) as a cofactor. In terms of processing, autophosphorylated on Ser-380, as part of the activation process.

It catalyses the reaction L-seryl-[protein] + ATP = O-phospho-L-seryl-[protein] + ADP + H(+). The enzyme catalyses L-threonyl-[protein] + ATP = O-phospho-L-threonyl-[protein] + ADP + H(+). Activated by multiple phosphorylations on threonine and serine residues. Functionally, serine/threonine kinase that may play a role in mediating the growth-factor and stress induced activation of transcription. The polypeptide is Ribosomal protein S6 kinase 2 beta (Xenopus laevis (African clawed frog)).